The following is a 210-amino-acid chain: Cuticle collagen 2C (210 aa).

The segment at 11–210 (CTGGQAGPPG…GVFFEDGTRR (200 aa)) is disordered. Composition is skewed to pro residues over residues 40-76 (PGRPPVQPCDPIPIPPCKPCPQGRPGPPGPIGPPGEP) and 88-103 (DAPPGPPGPKGPPGPP). Residues 105–122 (KAGAPGAAGQPGANAPSE) are compositionally biased toward low complexity. Over residues 123-144 (PLVPGPPGPPGPTGPEGPPGPN) the composition is skewed to pro residues. The span at 167–179 (HPGAPGNAGHPGQ) shows a compositional bias: low complexity.

It belongs to the cuticular collagen family.

Nematode cuticles are composed largely of collagen-like proteins. The cuticle functions both as an exoskeleton and as a barrier to protect the worm from its environment. The chain is Cuticle collagen 2C (2C) from Haemonchus contortus (Barber pole worm).